Here is a 330-residue protein sequence, read N- to C-terminus: UPF0353 protein MAP_3434 (330 aa).

Helical transmembrane passes span 21 to 41 (GMLL…VVQA) and 63 to 83 (LPIA…ATPT). The VWFA domain occupies 94 to 289 (VIMLVIDMSQ…GELQKSYNAI (196 aa)). The chain crosses the membrane as a helical span at residues 304 to 324 (AGWLRLGVLTALIATALALLI).

The protein belongs to the UPF0353 family.

The protein resides in the cell membrane. This Mycolicibacterium paratuberculosis (strain ATCC BAA-968 / K-10) (Mycobacterium paratuberculosis) protein is UPF0353 protein MAP_3434.